We begin with the raw amino-acid sequence, 100 residues long: Insertion element IS600 uncharacterized 11 kDa protein (100 aa).

The protein belongs to the transposase 8 family.

The polypeptide is Insertion element IS600 uncharacterized 11 kDa protein (Shigella sonnei).